A 449-amino-acid chain; its full sequence is MSHKSCYTNPGTGGKRPRNDKGNKVTVVLGAQWGDEGKGKVVDLLATESDIICRCQGGNNAGHTVVVDGMEYDFHLLPSGIINSKAVSVIGNGVVIHLPGLLEEAEKNEKKGLKDWEKRLIISDRAHIVFDFHQAVDGLQEVQRQAQDGKNIGTTKKGIGPTYSSKASRTGLRICDLLDDFKEFSTRFKNLAQQYQAMFPTLVVDVEGQLKKLKEYAERIRPMVRDGVYFMYDAINGPPKKILVEGANAALLDIDFGTYPFVTSSNCTVGGVCTGLGIPPLNIGDVYGVVKAYTTRVGIGAFPTEQLNEVGELLQTRGHEVGVTTGRKRRCGWLDLVILRYANMINGFTAFALTKLDILDVMDEIKVGVSYKLKGKKIPYFPANMDVLQKVEVEYEKLPGWKSDTSACRKWEDLPVKAQNYVRFVENHVGVPIKWVGVGKARESMIQMF.

The span at 1–10 (MSHKSCYTNP) shows a compositional bias: polar residues. The segment at 1 to 22 (MSHKSCYTNPGTGGKRPRNDKG) is disordered. Residues 34-40 (GDEGKGK) and 62-64 (GHT) contribute to the GTP site. Residue aspartate 35 is the Proton acceptor of the active site. The Mg(2+) site is built by aspartate 35 and glycine 62. Aspartate 35 provides a ligand contact to substrate. IMP-binding positions include 35–38 (DEGK), 60–63 (NAGH), threonine 155, arginine 169, asparagine 248, threonine 263, and arginine 327. Residue histidine 63 is the Proton donor of the active site. 323 to 329 (VTTGRKR) serves as a coordination point for substrate. GTP contacts are provided by residues arginine 329, 355–357 (KLD), and 437–440 (GVGK).

The protein belongs to the adenylosuccinate synthetase family. As to quaternary structure, homodimer. The cofactor is Mg(2+).

The protein localises to the cytoplasm. It catalyses the reaction IMP + L-aspartate + GTP = N(6)-(1,2-dicarboxyethyl)-AMP + GDP + phosphate + 2 H(+). It functions in the pathway purine metabolism; AMP biosynthesis via de novo pathway; AMP from IMP: step 1/2. Its function is as follows. Component of the purine nucleotide cycle (PNC), which interconverts IMP and AMP to regulate the nucleotide levels in various tissues, and which contributes to glycolysis and ammoniagenesis. Catalyzes the first committed step in the biosynthesis of AMP from IMP. The polypeptide is Adenylosuccinate synthetase isozyme 1 A (adss1a) (Salmo salar (Atlantic salmon)).